The primary structure comprises 232 residues: 5'-methylthioadenosine/S-adenosylhomocysteine nucleosidase (232 aa).

Catalysis depends on Glu-12, which acts as the Proton acceptor. Substrate-binding positions include Gly-78, Ile-152, and 173–174 (ME). Asp-197 acts as the Proton donor in catalysis.

This sequence belongs to the PNP/UDP phosphorylase family. MtnN subfamily. In terms of assembly, homodimer.

The enzyme catalyses S-adenosyl-L-homocysteine + H2O = S-(5-deoxy-D-ribos-5-yl)-L-homocysteine + adenine. It carries out the reaction S-methyl-5'-thioadenosine + H2O = 5-(methylsulfanyl)-D-ribose + adenine. It catalyses the reaction 5'-deoxyadenosine + H2O = 5-deoxy-D-ribose + adenine. It functions in the pathway amino-acid biosynthesis; L-methionine biosynthesis via salvage pathway; S-methyl-5-thio-alpha-D-ribose 1-phosphate from S-methyl-5'-thioadenosine (hydrolase route): step 1/2. Its function is as follows. Catalyzes the irreversible cleavage of the glycosidic bond in both 5'-methylthioadenosine (MTA) and S-adenosylhomocysteine (SAH/AdoHcy) to adenine and the corresponding thioribose, 5'-methylthioribose and S-ribosylhomocysteine, respectively. Also cleaves 5'-deoxyadenosine, a toxic by-product of radical S-adenosylmethionine (SAM) enzymes, into 5-deoxyribose and adenine. Thus, is required for in vivo function of the radical SAM enzymes biotin synthase and lipoic acid synthase, that are inhibited by 5'-deoxyadenosine accumulation. This chain is 5'-methylthioadenosine/S-adenosylhomocysteine nucleosidase, found in Salmonella paratyphi B (strain ATCC BAA-1250 / SPB7).